We begin with the raw amino-acid sequence, 235 residues long: Exosome complex component Rrp4 (235 aa).

Residues G67–Q139 enclose the S1 motif domain. A KH domain is found at G149 to A205.

This sequence belongs to the RRP4 family. In terms of assembly, component of the archaeal exosome complex. Forms a trimer of Rrp4 and/or Csl4 subunits. The trimer associates with a hexameric ring-like arrangement composed of 3 Rrp41-Rrp42 heterodimers.

It is found in the cytoplasm. Non-catalytic component of the exosome, which is a complex involved in RNA degradation. Increases the RNA binding and the efficiency of RNA degradation. Confers strong poly(A) specificity to the exosome. In Aeropyrum pernix (strain ATCC 700893 / DSM 11879 / JCM 9820 / NBRC 100138 / K1), this protein is Exosome complex component Rrp4.